The sequence spans 418 residues: Acetylornithine aminotransferase (418 aa).

Pyridoxal 5'-phosphate is bound by residues 116–117 and Phe-149; that span reads GA. Arg-152 contacts N(2)-acetyl-L-ornithine. 240 to 243 contributes to the pyridoxal 5'-phosphate binding site; it reads DEVQ. N6-(pyridoxal phosphate)lysine is present on Lys-269. Ser-296 contacts N(2)-acetyl-L-ornithine. Position 297 (Thr-297) interacts with pyridoxal 5'-phosphate.

This sequence belongs to the class-III pyridoxal-phosphate-dependent aminotransferase family. ArgD subfamily. As to quaternary structure, homodimer. It depends on pyridoxal 5'-phosphate as a cofactor.

The protein resides in the cytoplasm. The enzyme catalyses N(2)-acetyl-L-ornithine + 2-oxoglutarate = N-acetyl-L-glutamate 5-semialdehyde + L-glutamate. Its pathway is amino-acid biosynthesis; L-arginine biosynthesis; N(2)-acetyl-L-ornithine from L-glutamate: step 4/4. The protein is Acetylornithine aminotransferase of Prochlorococcus marinus (strain MIT 9313).